Reading from the N-terminus, the 107-residue chain is uncharacterized protein (107 aa).

This is an uncharacterized protein from Pasteurella multocida (strain Pm70).